Consider the following 395-residue polypeptide: MSGLACNSCNKDFEDDAEQKFHYKSEWHRYNLKRKIAGVPGVTEALFEARQAAIAQEKVKAVEAPMLYSCGICNKGYRSSKAHEQHLKSKSHVLKASTSTGEEDKAIIKQLPPRRVEKNNTAQLKGSIEEEESEDEWIEVDSDEDLDAEMNEDGEEEDMDEDGIEFELDPACCLMCDKKHKTIEKCMVHMHKFHGFFIPDIEYLKDPKGFLTYLGLKVKRDFVCLYCNELCHPFSSLEAVRKHMDAKGHCKVHYGDGGDEEDAELEEFYDYSSSYVNGDENQMVVSGESVNTVELFGGSELVITKRTDNKVTSRTLGSREFMRYYKQKPAPSSQKHIVNSLTSRYKMMGLATVQSKEAIVRMKVMREMNKRGAKSSVRLGMKSNVIRNLPNNVTY.

4 consecutive C2H2-type zinc fingers follow at residues 4-28 (LACNSCNKDFEDDAEQKFHYKSEWH), 68-92 (YSCGICNKGYRSSKAHEQHLKSKSH), 171-194 (ACCLMCDKKHKTIEKCMVHMHKFH), and 222-249 (FVCLYCNELCHPFSSLEAVRKHMDAKGH).

This sequence belongs to the REI1 family. In terms of assembly, can form homodimer. Interacts with RLP24, RLP24A, RPL24B, EBP1 and JJJ1.

It is found in the cytoplasm. Pre-60S-associated factor involved in the cytoplasmic maturation of the 60S subunit. Involved in the dissociation and recycling of other late pre-60S factors before newly synthesized large ribosomal subunits enter translation. Can complement the growth defect of a yeast mutant lacking REI1. Required for leaf growth under cold temperature conditions. The sequence is that of Cytoplasmic 60S subunit biogenesis factor REI1 homolog 2 from Arabidopsis thaliana (Mouse-ear cress).